Consider the following 312-residue polypeptide: Elongation factor Ts, mitochondrial (312 aa).

It belongs to the EF-Ts family.

It is found in the mitochondrion. Its function is as follows. Associates with the EF-Tu.GDP complex and induces the exchange of GDP to GTP. It remains bound to the aminoacyl-tRNA.EF-Tu.GTP complex up to the GTP hydrolysis stage on the ribosome. The polypeptide is Elongation factor Ts, mitochondrial (tsfm) (Xenopus laevis (African clawed frog)).